The primary structure comprises 190 residues: Segregation and condensation protein B (190 aa).

This sequence belongs to the ScpB family. As to quaternary structure, homodimer. Homodimerization may be required to stabilize the binding of ScpA to the Smc head domains. Component of a cohesin-like complex composed of ScpA, ScpB and the Smc homodimer, in which ScpA and ScpB bind to the head domain of Smc. The presence of the three proteins is required for the association of the complex with DNA.

The protein resides in the cytoplasm. Participates in chromosomal partition during cell division. May act via the formation of a condensin-like complex containing Smc and ScpA that pull DNA away from mid-cell into both cell halves. The polypeptide is Segregation and condensation protein B (Bacillus thuringiensis subsp. konkukian (strain 97-27)).